Consider the following 188-residue polypeptide: CXXC-type zinc finger protein 4 (188 aa).

Residues Met1 to Gln20 are disordered. A CXXC-type zinc finger spans residues Ala122–Glu163. Residues Cys129, Cys132, Cys135, Cys141, Cys144, Cys147, Cys157, and Cys162 each coordinate Zn(2+).

It is found in the cytoplasm. Functionally, acts as a negative regulator of the Wnt signaling pathway required for anterior neural structure formation. Binds preferentially to DNA containing cytidine-phosphate-guanosine (CpG) dinucleotides over CpH (H=A, T, and C), hemimethylated-CpG and hemimethylated-hydroxymethyl-CpG. In Xenopus tropicalis (Western clawed frog), this protein is CXXC-type zinc finger protein 4 (cxxc4).